The following is a 574-amino-acid chain: Galactose transporter (574 aa).

The tract at residues 1 to 57 (MAVEENNMPVVSQQPQAGEDVISSLSKDSHLSAQSQKYSNDELKAGESGSEGSQSVP) is disordered. The Cytoplasmic portion of the chain corresponds to 1 to 70 (MAVEENNMPV…PKKPMSEYVT (70 aa)). Positions 23 to 38 (SSLSKDSHLSAQSQKY) are enriched in polar residues. 7 positions are modified to phosphoserine: S32, S35, S39, S48, S50, S53, and S55. Residues 71-91 (VSLLCLCVAFGGFMFGWDTGT) traverse the membrane as a helical segment. Over 92-121 (ISGFVVQTDFLRRFGMKHKDGTHYLSNVRT) the chain is Extracellular. Residues 122–142 (GLIVAIFNIGCAFGGIILSKG) form a helical membrane-spanning segment. At 143-149 (GDMYGRK) the chain is on the cytoplasmic side. A helical membrane pass occupies residues 150-170 (KGLSIVVSVYIVGIIIQIASI). The Extracellular portion of the chain corresponds to 171–175 (NKWYQ). Residues 176–196 (YFIGRIISGLGVGGIAVLCPM) traverse the membrane as a helical segment. The Cytoplasmic segment spans residues 197-207 (LISEIAPKHLR). A helical transmembrane segment spans residues 208–228 (GTLVSCYQLMITAGIFLGYCT). Topologically, residues 229–242 (NYGTKSYSNSVQWR) are extracellular. A helical membrane pass occupies residues 243–263 (VPLGLCFAWSLFMIGALTLVP). Over 264–342 (ESPRYLCEVN…MGVFVQMFQQ (79 aa)) the chain is Cytoplasmic. Residues 343–362 (LTGNNYFFYYGTVIFKSVGL) traverse the membrane as a helical segment. Over 363–366 (DDSF) the chain is Extracellular. A helical membrane pass occupies residues 367–387 (ETSIVIGVVNFASTFFSLWTV). Residues 388–394 (ENLGHRK) are Cytoplasmic-facing. The helical transmembrane segment at 395–415 (CLLLGAATMMACMVIYASVGV) threads the bilayer. Residues 416 to 435 (TRLYPHGKSQPSSKGAGNCM) are Extracellular-facing. The chain crosses the membrane as a helical span at residues 436–456 (IVFTCFYIFCYATTWAPVAWV). Residues 457 to 472 (ITAESFPLRVKSKCMA) lie on the Cytoplasmic side of the membrane. The helical transmembrane segment at 473–493 (LASASNWVWGFLIAFFTPFIT) threads the bilayer. At 494–499 (SAINFY) the chain is on the extracellular side. A helical membrane pass occupies residues 500–520 (YGYVFMGCLVAMFFYVFFFVP). Residues 521–574 (ETKGLSLEEIQELWEEGVLPWKSEGWIPSSRRGNNYDLEDLQHDDKPWYKAMLE) lie on the Cytoplasmic side of the membrane.

This sequence belongs to the major facilitator superfamily. Sugar transporter (TC 2.A.1.1) family.

The protein resides in the membrane. Functionally, GAL2 is a facilitated diffusion transporter required for both the high-affinity galactokinase-dependent and low-affinity galactokinase-independent galactose transport processes. This is Galactose transporter (GAL2) from Saccharomyces cerevisiae (strain ATCC 204508 / S288c) (Baker's yeast).